A 234-amino-acid chain; its full sequence is Leucyl/phenylalanyl-tRNA--protein transferase (234 aa).

Belongs to the L/F-transferase family.

Its subcellular location is the cytoplasm. It carries out the reaction N-terminal L-lysyl-[protein] + L-leucyl-tRNA(Leu) = N-terminal L-leucyl-L-lysyl-[protein] + tRNA(Leu) + H(+). It catalyses the reaction N-terminal L-arginyl-[protein] + L-leucyl-tRNA(Leu) = N-terminal L-leucyl-L-arginyl-[protein] + tRNA(Leu) + H(+). The catalysed reaction is L-phenylalanyl-tRNA(Phe) + an N-terminal L-alpha-aminoacyl-[protein] = an N-terminal L-phenylalanyl-L-alpha-aminoacyl-[protein] + tRNA(Phe). Functions in the N-end rule pathway of protein degradation where it conjugates Leu, Phe and, less efficiently, Met from aminoacyl-tRNAs to the N-termini of proteins containing an N-terminal arginine or lysine. The protein is Leucyl/phenylalanyl-tRNA--protein transferase of Shigella boydii serotype 18 (strain CDC 3083-94 / BS512).